Here is a 908-residue protein sequence, read N- to C-terminus: Protein translocase subunit SecA (908 aa).

ATP is bound by residues glutamine 87, glycine 105–threonine 109, and aspartate 512. The tract at residues glycine 866–serine 908 is disordered. Residues methionine 879–arginine 888 show a composition bias toward basic and acidic residues. Zn(2+)-binding residues include cysteine 892, cysteine 894, cysteine 903, and histidine 904. Residues arginine 898–serine 908 are compositionally biased toward basic residues.

Belongs to the SecA family. As to quaternary structure, monomer and homodimer. Part of the essential Sec protein translocation apparatus which comprises SecA, SecYEG and auxiliary proteins SecDF-YajC and YidC. The cofactor is Zn(2+).

It localises to the cell inner membrane. The protein localises to the cytoplasm. The enzyme catalyses ATP + H2O + cellular proteinSide 1 = ADP + phosphate + cellular proteinSide 2.. Functionally, part of the Sec protein translocase complex. Interacts with the SecYEG preprotein conducting channel. Has a central role in coupling the hydrolysis of ATP to the transfer of proteins into and across the cell membrane, serving both as a receptor for the preprotein-SecB complex and as an ATP-driven molecular motor driving the stepwise translocation of polypeptide chains across the membrane. This is Protein translocase subunit SecA from Shewanella oneidensis (strain ATCC 700550 / JCM 31522 / CIP 106686 / LMG 19005 / NCIMB 14063 / MR-1).